The following is a 148-amino-acid chain: Arginine repressor (148 aa).

The protein belongs to the ArgR family.

It is found in the cytoplasm. The protein operates within amino-acid biosynthesis; L-arginine biosynthesis [regulation]. Functionally, regulates arginine biosynthesis genes. This is Arginine repressor (argR) from Streptococcus pneumoniae serotype 4 (strain ATCC BAA-334 / TIGR4).